The sequence spans 461 residues: Fumarate hydratase class II (461 aa).

Substrate is bound by residues 97 to 99 (SGT), 127 to 130 (HPND), 137 to 139 (SSN), and Thr-185. Residue His-186 is the Proton donor/acceptor of the active site. Ser-316 is an active-site residue. Residues Ser-317 and 322–324 (KVN) contribute to the substrate site.

The protein belongs to the class-II fumarase/aspartase family. Fumarase subfamily. Homotetramer.

Its subcellular location is the cytoplasm. The enzyme catalyses (S)-malate = fumarate + H2O. It functions in the pathway carbohydrate metabolism; tricarboxylic acid cycle; (S)-malate from fumarate: step 1/1. Functionally, involved in the TCA cycle. Catalyzes the stereospecific interconversion of fumarate to L-malate. The sequence is that of Fumarate hydratase class II from Oceanobacillus iheyensis (strain DSM 14371 / CIP 107618 / JCM 11309 / KCTC 3954 / HTE831).